The primary structure comprises 451 residues: Chaperone SurA (451 aa).

Positions 1-26 are cleaved as a signal peptide; it reads MKKIIPTNLFKLISILFILTPFFAWS. PpiC domains are found at residues 179–280 and 290–388; these read DVEY…QLQG and KQYH…FLDG.

The protein resides in the periplasm. It carries out the reaction [protein]-peptidylproline (omega=180) = [protein]-peptidylproline (omega=0). Functionally, chaperone involved in the correct folding and assembly of outer membrane proteins. Recognizes specific patterns of aromatic residues and the orientation of their side chains, which are found more frequently in integral outer membrane proteins. May act in both early periplasmic and late outer membrane-associated steps of protein maturation. In Hydrogenovibrio crunogenus (strain DSM 25203 / XCL-2) (Thiomicrospira crunogena), this protein is Chaperone SurA.